The chain runs to 197 residues: uncharacterized protein (197 aa).

The helical transmembrane segment at 150-172 (SLKLNTTLPMFALNLICLLRSIL) threads the bilayer.

Its subcellular location is the membrane. This is an uncharacterized protein from Saccharomyces cerevisiae (strain ATCC 204508 / S288c) (Baker's yeast).